The following is a 149-amino-acid chain: SsrA-binding protein (149 aa).

Belongs to the SmpB family.

The protein resides in the cytoplasm. Its function is as follows. Required for rescue of stalled ribosomes mediated by trans-translation. Binds to transfer-messenger RNA (tmRNA), required for stable association of tmRNA with ribosomes. tmRNA and SmpB together mimic tRNA shape, replacing the anticodon stem-loop with SmpB. tmRNA is encoded by the ssrA gene; the 2 termini fold to resemble tRNA(Ala) and it encodes a 'tag peptide', a short internal open reading frame. During trans-translation Ala-aminoacylated tmRNA acts like a tRNA, entering the A-site of stalled ribosomes, displacing the stalled mRNA. The ribosome then switches to translate the ORF on the tmRNA; the nascent peptide is terminated with the 'tag peptide' encoded by the tmRNA and targeted for degradation. The ribosome is freed to recommence translation, which seems to be the essential function of trans-translation. The chain is SsrA-binding protein from Wolbachia pipientis subsp. Culex pipiens (strain wPip).